The following is a 225-amino-acid chain: Urease accessory protein UreG (225 aa).

25 to 32 (GPVGAGKT) contacts GTP.

The protein belongs to the SIMIBI class G3E GTPase family. UreG subfamily. In terms of assembly, homodimer. UreD, UreF and UreG form a complex that acts as a GTP-hydrolysis-dependent molecular chaperone, activating the urease apoprotein by helping to assemble the nickel containing metallocenter of UreC. The UreE protein probably delivers the nickel.

It is found in the cytoplasm. Its function is as follows. Facilitates the functional incorporation of the urease nickel metallocenter. This process requires GTP hydrolysis, probably effectuated by UreG. In Haemophilus influenzae (strain 86-028NP), this protein is Urease accessory protein UreG.